We begin with the raw amino-acid sequence, 125 residues long: Small ribosomal subunit protein uS13 (125 aa).

The tract at residues Arg92 to Lys125 is disordered. The span at Arg107–Lys125 shows a compositional bias: basic residues.

This sequence belongs to the universal ribosomal protein uS13 family. Part of the 30S ribosomal subunit. Forms a loose heterodimer with protein S19. Forms two bridges to the 50S subunit in the 70S ribosome.

Its function is as follows. Located at the top of the head of the 30S subunit, it contacts several helices of the 16S rRNA. In the 70S ribosome it contacts the 23S rRNA (bridge B1a) and protein L5 of the 50S subunit (bridge B1b), connecting the 2 subunits; these bridges are implicated in subunit movement. Contacts the tRNAs in the A and P-sites. In Chlorobium phaeobacteroides (strain BS1), this protein is Small ribosomal subunit protein uS13.